A 98-amino-acid chain; its full sequence is Cystatin-A (98 aa).

Methionine 1 is subject to N-acetylmethionine. Positions glutamine 46–glycine 50 match the Secondary area of contact motif.

The protein belongs to the cystatin family.

The protein localises to the cytoplasm. Functionally, this is an intracellular thiol proteinase inhibitor. The protein is Cystatin-A (CSTA) of Felis catus (Cat).